The following is a 338-amino-acid chain: Aspartate-semialdehyde dehydrogenase (338 aa).

Residues 13–16 (SGAV) and 41–42 (RS) each bind NADP(+). Residue Arg101 coordinates phosphate. Catalysis depends on Cys132, which acts as the Acyl-thioester intermediate. Substrate is bound at residue Gln159. Residues 162 to 163 (SG) and Pro187 each bind NADP(+). Lys216 contacts phosphate. Substrate is bound at residue Arg238. His245 acts as the Proton acceptor in catalysis. Position 317 (Asn317) interacts with NADP(+).

The protein belongs to the aspartate-semialdehyde dehydrogenase family. In terms of assembly, homodimer.

The catalysed reaction is L-aspartate 4-semialdehyde + phosphate + NADP(+) = 4-phospho-L-aspartate + NADPH + H(+). The protein operates within amino-acid biosynthesis; L-lysine biosynthesis via DAP pathway; (S)-tetrahydrodipicolinate from L-aspartate: step 2/4. Its pathway is amino-acid biosynthesis; L-methionine biosynthesis via de novo pathway; L-homoserine from L-aspartate: step 2/3. It participates in amino-acid biosynthesis; L-threonine biosynthesis; L-threonine from L-aspartate: step 2/5. Catalyzes the NADPH-dependent formation of L-aspartate-semialdehyde (L-ASA) by the reductive dephosphorylation of L-aspartyl-4-phosphate. The protein is Aspartate-semialdehyde dehydrogenase of Shewanella sp. (strain DB6705).